The sequence spans 472 residues: Adenosylhomocysteinase (472 aa).

Substrate contacts are provided by threonine 60, aspartate 136, and glutamate 197. NAD(+) is bound at residue 198–200 (TTT). Substrate contacts are provided by lysine 227 and aspartate 231. NAD(+) is bound by residues asparagine 232, 261 to 266 (GYGDVG), glutamate 284, asparagine 319, 340 to 342 (IGH), and asparagine 388.

The protein belongs to the adenosylhomocysteinase family. NAD(+) serves as cofactor.

It is found in the cytoplasm. The enzyme catalyses S-adenosyl-L-homocysteine + H2O = L-homocysteine + adenosine. Its pathway is amino-acid biosynthesis; L-homocysteine biosynthesis; L-homocysteine from S-adenosyl-L-homocysteine: step 1/1. May play a key role in the regulation of the intracellular concentration of adenosylhomocysteine. The protein is Adenosylhomocysteinase of Maridesulfovibrio salexigens (strain ATCC 14822 / DSM 2638 / NCIMB 8403 / VKM B-1763) (Desulfovibrio salexigens).